The primary structure comprises 1134 residues: ATP-dependent helicase/deoxyribonuclease subunit B (1134 aa).

8-15 (GRAGSGKS) contributes to the ATP binding site. The [4Fe-4S] cluster site is built by Cys771, Cys1089, Cys1092, and Cys1098.

This sequence belongs to the helicase family. AddB/RexB type 1 subfamily. As to quaternary structure, heterodimer of AddA and AddB. Requires Mg(2+) as cofactor. The cofactor is [4Fe-4S] cluster.

Its function is as follows. The heterodimer acts as both an ATP-dependent DNA helicase and an ATP-dependent, dual-direction single-stranded exonuclease. Recognizes the chi site generating a DNA molecule suitable for the initiation of homologous recombination. The AddB subunit has 5' -&gt; 3' nuclease activity but not helicase activity. In Clostridium novyi (strain NT), this protein is ATP-dependent helicase/deoxyribonuclease subunit B.